Here is a 148-residue protein sequence, read N- to C-terminus: Small ribosomal subunit protein bS6 (148 aa).

A disordered region spans residues 96–148; sequence HEEGQSAMLTRRDDRRERDGDDRPRRREGGFDRGDRGDRGPRRPRDTEAGEGA.

This sequence belongs to the bacterial ribosomal protein bS6 family.

In terms of biological role, binds together with bS18 to 16S ribosomal RNA. The chain is Small ribosomal subunit protein bS6 from Brucella canis (strain ATCC 23365 / NCTC 10854 / RM-666).